The primary structure comprises 296 residues: HVA22-like protein i (296 aa).

The segment at 146-296 (STPRPQPPQK…LRKTRSEESR (151 aa)) is disordered. Over residues 180-193 (VSLSSSSSSSSSEN) the composition is skewed to low complexity. The segment covering 223–233 (AGTTQIAQKSV) has biased composition (polar residues). Residues 251-261 (QIEEVEGEAES) show a composition bias toward acidic residues. The segment covering 270–281 (GPKETVMEETIR) has biased composition (basic and acidic residues).

This sequence belongs to the DP1 family.

The chain is HVA22-like protein i (HVA22I) from Arabidopsis thaliana (Mouse-ear cress).